The sequence spans 178 residues: MEQFHGTTIVSVRRGDKVALGGDGQVTLGNIVMKGGARKVRRIYNNQVLVGFAGGTADAFSLLDRFEAKLEKHQGNLTRAAVELAKDWRTDRMLRRLEAMLITADANTTLVITGNGDVLDPEGGICAIGSGGAYAQAAARALAENTELSPREIVEKSLEIAGDMCIYTNHNRVIETIE.

The active site involves Thr7. Gly162, Cys165, and Thr168 together coordinate Na(+).

The protein belongs to the peptidase T1B family. HslV subfamily. As to quaternary structure, a double ring-shaped homohexamer of HslV is capped on each side by a ring-shaped HslU homohexamer. The assembly of the HslU/HslV complex is dependent on binding of ATP.

The protein resides in the cytoplasm. It carries out the reaction ATP-dependent cleavage of peptide bonds with broad specificity.. With respect to regulation, allosterically activated by HslU binding. Protease subunit of a proteasome-like degradation complex believed to be a general protein degrading machinery. The chain is ATP-dependent protease subunit HslV from Burkholderia multivorans (strain ATCC 17616 / 249).